Consider the following 306-residue polypeptide: Agmatinase (306 aa).

H126, D149, H151, D153, D230, and D232 together coordinate Mn(2+).

Belongs to the arginase family. Agmatinase subfamily. It depends on Mn(2+) as a cofactor.

It catalyses the reaction agmatine + H2O = urea + putrescine. The protein operates within amine and polyamine biosynthesis; putrescine biosynthesis via agmatine pathway; putrescine from agmatine: step 1/1. Functionally, catalyzes the formation of putrescine from agmatine. In Klebsiella pneumoniae (strain 342), this protein is Agmatinase.